The chain runs to 199 residues: MEQFYYYWSMWFLWVLTTFIFEKTKRRIAVSVFILTNIILSIHDIALYFSLNAAYLMFFVCGCVYAGYLGMYRFRYIMVYLTLVAAYAFVYLFALYDPVWFIIKPEWAAVILIVLLTASVERNFEKQLVLFVLGMCQGELVYSFVIQKLAGAMAVGGFQWLNACSAGMILLFGISKYEHLASQIGQKSKRSNKGATKMS.

Transmembrane regions (helical) follow at residues 1-21 (MEQFYYYWSMWFLWVLTTFIF), 28-48 (IAVSVFILTNIILSIHDIALY), 51-71 (LNAAYLMFFVCGCVYAGYLGM), 83-103 (LVAAYAFVYLFALYDPVWFII), 127-147 (QLVLFVLGMCQGELVYSFVIQ), and 154-174 (AVGGFQWLNACSAGMILLFGI).

The protein resides in the cell membrane. This is an uncharacterized protein from Bacillus subtilis (strain 168).